Here is a 493-residue protein sequence, read N- to C-terminus: Alpha-amylase-related protein (493 aa).

The N-terminal stretch at 1–19 is a signal peptide; it reads MFKLALTLTLCLAGSLSLA. Q20 carries the post-translational modification Pyrrolidone carboxylic acid. Residues C47 and C103 are joined by a disulfide bond. N117, Q168, and D177 together coordinate Ca(2+). C156 and C170 are joined by a disulfide. R205 provides a ligand contact to chloride. Residue D207 is the Nucleophile of the active site. H211 serves as a coordination point for Ca(2+). E244 acts as the Proton donor in catalysis. Residues N307 and R342 each coordinate chloride. 3 cysteine pairs are disulfide-bonded: C375-C381, C417-C440, and C447-C459.

The protein belongs to the glycosyl hydrolase 13 family. As to quaternary structure, monomer. It depends on Ca(2+) as a cofactor. Chloride serves as cofactor.

The protein resides in the secreted. It carries out the reaction Endohydrolysis of (1-&gt;4)-alpha-D-glucosidic linkages in polysaccharides containing three or more (1-&gt;4)-alpha-linked D-glucose units.. The sequence is that of Alpha-amylase-related protein (Amyrel) from Drosophila teissieri (Fruit fly).